The following is a 267-amino-acid chain: NAD kinase (267 aa).

Catalysis depends on Asp45, which acts as the Proton acceptor. NAD(+) contacts are provided by residues 45–46, 123–124, Arg149, Asp151, Ala186, and Asn226; these read DG and NE.

Belongs to the NAD kinase family. The cofactor is a divalent metal cation.

It localises to the cytoplasm. The catalysed reaction is NAD(+) + ATP = ADP + NADP(+) + H(+). Functionally, involved in the regulation of the intracellular balance of NAD and NADP, and is a key enzyme in the biosynthesis of NADP. Catalyzes specifically the phosphorylation on 2'-hydroxyl of the adenosine moiety of NAD to yield NADP. The protein is NAD kinase of Shouchella clausii (strain KSM-K16) (Alkalihalobacillus clausii).